The following is a 970-amino-acid chain: uncharacterized protein (970 aa).

Residues 11–31 (WILKIGTILGLVCLGLFGVIF) traverse the membrane as a helical segment. A disordered region spans residues 366–387 (ASNSNDNNNQNNNNNNNSSDVI). Low complexity predominate over residues 367 to 387 (SNSNDNNNQNNNNNNNSSDVI). 11 consecutive transmembrane segments (helical) span residues 515-535 (FASS…LLTL), 537-557 (YKLL…SSLV), 558-578 (IFSA…FFVI), 614-634 (FFAN…VIYL), 645-665 (LMAI…IVLI), 726-746 (FLFV…LYLV), 762-782 (SNGI…YCLI), 789-809 (CLSY…VMYL), 816-836 (IDQS…FFAA), 877-897 (IESS…FGGI), and 903-923 (LVIF…AFLP).

It is found in the cell membrane. This is an uncharacterized protein from Mycoplasma genitalium (strain ATCC 33530 / DSM 19775 / NCTC 10195 / G37) (Mycoplasmoides genitalium).